A 217-amino-acid polypeptide reads, in one-letter code: UPF0193 protein EVG1 (217 aa).

This sequence belongs to the UPF0193 (EVG1) family.

The polypeptide is UPF0193 protein EVG1 (C22orf23) (Homo sapiens (Human)).